We begin with the raw amino-acid sequence, 562 residues long: Protein wntless (562 aa).

Residues 1-13 (MSGTILENLSGRK) lie on the Cytoplasmic side of the membrane. The chain crosses the membrane as a helical span at residues 14–34 (LSILVGSLLLCQVLCFLLGGL). The Lumenal portion of the chain corresponds to 35-239 (YAPVPAGHTN…AIHQNGGFTH (205 aa)). The N-linked (GlcNAc...) asparagine glycan is linked to asparagine 58. Residues 240 to 260 (VWLMLKTLLFPFVVGIMVWFW) form a helical membrane-spanning segment. Over 261–270 (RRVHLLQRSP) the chain is Cytoplasmic. The helical transmembrane segment at 271-291 (ALLEYMLLYLGGALTFLNLPL) threads the bilayer. Topologically, residues 292-311 (EYLSLTIEMPYMLLLSDIRQ) are lumenal. A helical transmembrane segment spans residues 312 to 332 (GIFYAMLLSFWLVFAGEHMLI). Topologically, residues 333–344 (QDSSNKSTIRSR) are cytoplasmic. A helical membrane pass occupies residues 345–365 (YWKHLSAVVVGCISLFVFDIS). The Lumenal portion of the chain corresponds to 366-386 (ERGVQLRNPFYSIWTTPLGAK). A helical membrane pass occupies residues 387–407 (VAMSFILLAGVSAAVYFLFLC). Topologically, residues 408-441 (YMISKVFKNIGDKRTSLPSMSQARRLHYEGLIYR) are cytoplasmic. A helical transmembrane segment spans residues 442-462 (FKFLMLATLLCAALTVTGFIM). At 463–482 (GQMAEGQWKWNDDVEIQLTS) the chain is on the lumenal side. Residues 483–503 (AFLTGVYGMWNIYIFALLILY) form a helical membrane-spanning segment. Residues 504–562 (APSHKQWPTMHHSDETTQSNENIVASAASEEIEFSNLPSDSNPSEISSLTSFTRKVAFE) lie on the Cytoplasmic side of the membrane. The disordered stretch occupies residues 538–562 (SNLPSDSNPSEISSLTSFTRKVAFE). The span at 539–556 (NLPSDSNPSEISSLTSFT) shows a compositional bias: polar residues.

It belongs to the wntless family. In terms of assembly, interacts with wg; in the Golgi. Interacts with Vps35, a component of the retromer complex; wls stability is regulated by Vps35.

Its subcellular location is the presynaptic cell membrane. It is found in the postsynaptic cell membrane. The protein localises to the cell membrane. It localises to the endoplasmic reticulum membrane. The protein resides in the endosome membrane. Its subcellular location is the golgi apparatus membrane. In terms of biological role, a segment polarity gene required for wingless (wg)-dependent patterning processes, acting in both wg-sending cells and wg-target cells. In non-neuronal cells wls directs wg secretion. The wls traffic loop encompasses the Golgi, the cell surface, an endocytic compartment and a retrograde route leading back to the Golgi, and involves clathrin-mediated endocytosis and the retromer complex (a conserved protein complex consisting of Vps35 and Vps26). In neuronal cells (the larval motorneuron NMJ), the wg signal moves across the synapse via the release of wls-containing exosome-like vesicles. Postsynaptic wls is required for the trafficking of fz2 through the fz2-interacting protein Grip. The sequence is that of Protein wntless from Drosophila pseudoobscura pseudoobscura (Fruit fly).